The following is a 317-amino-acid chain: U5 small nuclear ribonucleoprotein TSSC4 (317 aa).

The span at 1-19 (MAETEAGLEADEPTEDDTL) shows a compositional bias: acidic residues. Positions 1–74 (MAETEAGLEA…PPTGTLTTAV (74 aa)) are disordered. The segment covering 20-37 (PSDTVSLSDSDSDLSLPS) has biased composition (low complexity). Phosphoserine occurs at positions 57, 64, 83, and 92. The tract at residues 74-101 (VQPFHLRGMSSTFSQRSHSIFDCLESAA) is hom2; mediates interaction with the U5 snRNP complexes and required for spliceosomal tri-snRNP complex assembly. The tract at residues 101–152 (ARQAPCSAPQTSVSDNGSFRRPVTPPSQTPARGLSRVHGNTGPTRVLPVPDY) is disordered. Over residues 108-117 (APQTSVSDNG) the composition is skewed to polar residues. Thr-124 is subject to Phosphothreonine. Residues 146-300 (VLPVPDYVSH…SKKRSRDHFR (155 aa)) are interaction with SNRNP200. A hom3; mediates interaction with the U5 snRNP complexes region spans residues 147–183 (LPVPDYVSHPERWTKYSLEDVSEASEQSNRDAALAFL). Positions 198–238 (FNQDPSSCGEGRVVFTKPVRDSEARAERKRVLKKGVGSGAG) are hom4; necessary for interaction with the PRPF19 complex and required for spliceosomal tri-snRNP complex assembly. Lys-214 bears the N6-acetyllysine mark. A disordered region spans residues 216-317 (VRDSEARAER…GPGSERGPSV (102 aa)). The segment covering 240 to 250 (EAAVELAHLAG) has biased composition (low complexity).

This sequence belongs to the TSSC4 family. In terms of assembly, interacts in a RNA-independent manner with distinct U5 snRNP-containing complexes, the mono-U5 snRNP and the post-splicing U5 snRNP-PRPF19 complex. Interacts with SNRNP200; the interaction is direct, excludes recruitment of C9ORF78 and WBP4 to SNRNP200 and negatively regulates its RNA helicase activity. Interacts with PRPF8; the interaction is direct. In terms of tissue distribution, expressed in placenta. Widely expressed in embryo and newborn.

It is found in the nucleus. The protein localises to the cytoplasm. Functionally, protein associated with the U5 snRNP, during its maturation and its post-splicing recycling and which is required for spliceosomal tri-snRNP complex assembly in the nucleus. Has a molecular sequestering activity and transiently hinders SNRNP200 binding sites for constitutive splicing factors that intervene later during the assembly of the spliceosome and splicing. Together with its molecular sequestering activity, may also function as a molecular adapter and placeholder, coordinating the assembly of the U5 snRNP and its association with the U4/U6 di-snRNP. The chain is U5 small nuclear ribonucleoprotein TSSC4 from Mus musculus (Mouse).